The sequence spans 299 residues: 21S rRNA pseudouridine(2819) synthase (299 aa).

The active site involves Asp-106.

Belongs to the pseudouridine synthase RluA family.

Its subcellular location is the mitochondrion. It catalyses the reaction uridine(2819) in 21S rRNA = pseudouridine(2819) in 21S rRNA. Pseudouridylate synthase responsible for the pseudouridine-2819 formation in mitochondrial 21S rRNA. May modulate the efficiency or the fidelity of the mitochondrial translation machinery. In Kluyveromyces lactis (strain ATCC 8585 / CBS 2359 / DSM 70799 / NBRC 1267 / NRRL Y-1140 / WM37) (Yeast), this protein is 21S rRNA pseudouridine(2819) synthase (PUS5).